Here is an 81-residue protein sequence, read N- to C-terminus: Sec-independent protein translocase protein TatA (81 aa).

A helical transmembrane segment spans residues methionine 1 to glycine 21. The disordered stretch occupies residues glycine 34–alanine 81. Basic and acidic residues-rich tracts occupy residues aspartate 47–glutamine 59 and lysine 70–alanine 81.

It belongs to the TatA/E family. The Tat system comprises two distinct complexes: a TatABC complex, containing multiple copies of TatA, TatB and TatC subunits, and a separate TatA complex, containing only TatA subunits. Substrates initially bind to the TatABC complex, which probably triggers association of the separate TatA complex to form the active translocon.

It is found in the cell inner membrane. In terms of biological role, part of the twin-arginine translocation (Tat) system that transports large folded proteins containing a characteristic twin-arginine motif in their signal peptide across membranes. TatA could form the protein-conducting channel of the Tat system. This is Sec-independent protein translocase protein TatA from Shewanella frigidimarina (strain NCIMB 400).